The following is a 345-amino-acid chain: Ferrochelatase (345 aa).

Fe cation-binding residues include His-199 and Glu-302.

This sequence belongs to the ferrochelatase family.

It is found in the cytoplasm. The enzyme catalyses heme b + 2 H(+) = protoporphyrin IX + Fe(2+). The protein operates within porphyrin-containing compound metabolism; protoheme biosynthesis; protoheme from protoporphyrin-IX: step 1/1. In terms of biological role, catalyzes the ferrous insertion into protoporphyrin IX. The sequence is that of Ferrochelatase from Porphyromonas gingivalis (strain ATCC 33277 / DSM 20709 / CIP 103683 / JCM 12257 / NCTC 11834 / 2561).